Here is a 398-residue protein sequence, read N- to C-terminus: Probable beta-1,3-galactosyltransferase 5 (398 aa).

A helical; Signal-anchor for type II membrane protein membrane pass occupies residues 11–31 (LTMTWVPLLCISCFFLGAIFT). N-linked (GlcNAc...) asparagine glycosylation is found at Asn-110, Asn-115, and Asn-206.

It belongs to the glycosyltransferase 31 family. It depends on Mn(2+) as a cofactor.

It localises to the golgi apparatus membrane. It participates in protein modification; protein glycosylation. Its function is as follows. Beta-1,3-galactosyltransferase that transfers galactose from UDP-galactose to substrates with a terminal glycosyl residue. This is Probable beta-1,3-galactosyltransferase 5 (B3GALT5) from Arabidopsis thaliana (Mouse-ear cress).